Here is a 503-residue protein sequence, read N- to C-terminus: Discoidin, CUB and LCCL domain-containing protein 1 (503 aa).

The signal sequence occupies residues 1-25 (MGTGAGGPSVLALLFAVCAPLRLQA). Residues 26 to 250 (EELGDGCGHI…FTTPGMNITT (225 aa)) lie on the Extracellular side of the membrane. Disulfide bonds link C32–C59, C85–C103, C149–C165, and C169–C191. A CUB domain is found at 32–141 (CGHIVTSQDS…RGFLLTYASS (110 aa)). An N-linked (GlcNAc...) asparagine glycan is attached at N55. The region spanning 143-239 (HPDLITCLER…RHGSLSEKRF (97 aa)) is the LCCL domain. N247 carries N-linked (GlcNAc...) asparagine glycosylation. Residues 251 to 271 (VAIPSVIFIALLLTGMGIFAI) form a helical membrane-spanning segment. Residues 272 to 503 (CRKRKKKGNP…LNQTAMTALL (232 aa)) are Cytoplasmic-facing. Position 305 is a phosphoserine (S305). T406 is subject to Phosphothreonine. A disordered region spans residues 410-503 (QSGYRVPGPR…LNQTAMTALL (94 aa)). Over residues 494–503 (LNQTAMTALL) the composition is skewed to polar residues.

It is found in the membrane. In Mus musculus (Mouse), this protein is Discoidin, CUB and LCCL domain-containing protein 1 (Dcbld1).